The primary structure comprises 424 residues: Gamma-glutamyl phosphate reductase (424 aa).

This sequence belongs to the gamma-glutamyl phosphate reductase family.

The protein resides in the cytoplasm. It catalyses the reaction L-glutamate 5-semialdehyde + phosphate + NADP(+) = L-glutamyl 5-phosphate + NADPH + H(+). The protein operates within amino-acid biosynthesis; L-proline biosynthesis; L-glutamate 5-semialdehyde from L-glutamate: step 2/2. In terms of biological role, catalyzes the NADPH-dependent reduction of L-glutamate 5-phosphate into L-glutamate 5-semialdehyde and phosphate. The product spontaneously undergoes cyclization to form 1-pyrroline-5-carboxylate. This Dehalococcoides mccartyi (strain CBDB1) protein is Gamma-glutamyl phosphate reductase.